We begin with the raw amino-acid sequence, 402 residues long: Acetate kinase (402 aa).

N13 provides a ligand contact to Mg(2+). K20 lines the ATP pocket. R94 provides a ligand contact to substrate. Residue D151 is the Proton donor/acceptor of the active site. ATP contacts are provided by residues 211–215, 285–287, and 333–337; these read HLGNG, DFR, and GVGEN. E387 lines the Mg(2+) pocket.

The protein belongs to the acetokinase family. As to quaternary structure, homodimer. Mg(2+) serves as cofactor. The cofactor is Mn(2+).

It localises to the cytoplasm. It catalyses the reaction acetate + ATP = acetyl phosphate + ADP. It functions in the pathway metabolic intermediate biosynthesis; acetyl-CoA biosynthesis; acetyl-CoA from acetate: step 1/2. Catalyzes the formation of acetyl phosphate from acetate and ATP. Can also catalyze the reverse reaction. The chain is Acetate kinase from Nocardia farcinica (strain IFM 10152).